A 591-amino-acid polypeptide reads, in one-letter code: Glutathione S-transferase T2 (591 aa).

Residues 1–82 (MKLKVYADRM…YLSSAYASVV (82 aa)) form the GST N-terminal domain. Residues 11-12 (SQ), 40-41 (QL), 53-54 (KV), and 66-67 (ES) contribute to the glutathione site. The GST C-terminal domain occupies 89 to 226 (DLSKRAKIHS…EVLFRAKDRF (138 aa)). Residues 229-272 (QREMATASKPGPQSKIIQFSSIGGTSDGPNLVQDTTDRKARRRK) form a disordered region. The segment covering 243-262 (KIIQFSSIGGTSDGPNLVQD) has biased composition (polar residues). The Myb-like domain occupies 265 to 338 (DRKARRRKWS…HCRQRWRKIN (74 aa)).

Belongs to the GST superfamily. Theta family.

The protein resides in the peroxisome. The enzyme catalyses RX + glutathione = an S-substituted glutathione + a halide anion + H(+). Its function is as follows. May be involved in the conjugation of reduced glutathione to a wide number of exogenous and endogenous hydrophobic electrophiles and have a detoxification role against certain herbicides. The protein is Glutathione S-transferase T2 (GSTT2) of Arabidopsis thaliana (Mouse-ear cress).